The chain runs to 524 residues: Glutamyl-tRNA(Gln) amidotransferase subunit A, mitochondrial (524 aa).

Residues K76 and S171 each act as charge relay system in the active site. Residue S195 is the Acyl-ester intermediate of the active site.

It belongs to the amidase family. GatA subfamily. In terms of assembly, subunit of the heterotrimeric GatCAB amidotransferase (AdT) complex, composed of A (qrsl1), B (gatb) and C (gatc) subunits.

The protein resides in the mitochondrion. The catalysed reaction is L-glutamyl-tRNA(Gln) + L-glutamine + ATP + H2O = L-glutaminyl-tRNA(Gln) + L-glutamate + ADP + phosphate + H(+). Functionally, allows the formation of correctly charged Gln-tRNA(Gln) through the transamidation of misacylated Glu-tRNA(Gln) in the mitochondria. The reaction takes place in the presence of glutamine and ATP through an activated gamma-phospho-Glu-tRNA(Gln). This is Glutamyl-tRNA(Gln) amidotransferase subunit A, mitochondrial (qrsl1) from Xenopus laevis (African clawed frog).